The sequence spans 177 residues: 3-hydroxydecanoyl-[acyl-carrier-protein] dehydratase (177 aa).

The active site involves histidine 76.

The protein belongs to the thioester dehydratase family. FabA subfamily. As to quaternary structure, homodimer.

It localises to the cytoplasm. It carries out the reaction a (3R)-hydroxyacyl-[ACP] = a (2E)-enoyl-[ACP] + H2O. The enzyme catalyses (3R)-hydroxydecanoyl-[ACP] = (2E)-decenoyl-[ACP] + H2O. It catalyses the reaction (2E)-decenoyl-[ACP] = (3Z)-decenoyl-[ACP]. It functions in the pathway lipid metabolism; fatty acid biosynthesis. Its function is as follows. Necessary for the introduction of cis unsaturation into fatty acids. Catalyzes the dehydration of (3R)-3-hydroxydecanoyl-ACP to E-(2)-decenoyl-ACP and then its isomerization to Z-(3)-decenoyl-ACP. Can catalyze the dehydratase reaction for beta-hydroxyacyl-ACPs with saturated chain lengths up to 16:0, being most active on intermediate chain length. This Haemophilus influenzae (strain PittGG) protein is 3-hydroxydecanoyl-[acyl-carrier-protein] dehydratase.